The chain runs to 273 residues: ATP synthase subunit a (273 aa).

A run of 7 helical transmembrane segments spans residues 41–61 (ILNI…LLIF), 101–121 (LIAP…LMDL), 122–142 (LAVD…ALRV), 143–163 (VPSA…ILII), 183–203 (PFNH…SLLS), 221–241 (LVFI…ISVP), and 247–267 (IIVI…YIAM).

Belongs to the ATPase A chain family. As to quaternary structure, F-type ATPases have 2 components, CF(1) - the catalytic core - and CF(0) - the membrane proton channel. CF(1) has five subunits: alpha(3), beta(3), gamma(1), delta(1), epsilon(1). CF(0) has three main subunits: a(1), b(2) and c(9-12). The alpha and beta chains form an alternating ring which encloses part of the gamma chain. CF(1) is attached to CF(0) by a central stalk formed by the gamma and epsilon chains, while a peripheral stalk is formed by the delta and b chains.

It is found in the cell membrane. Its function is as follows. Key component of the proton channel; it plays a direct role in the translocation of protons across the membrane. The polypeptide is ATP synthase subunit a (Baumannia cicadellinicola subsp. Homalodisca coagulata).